The following is a 99-amino-acid chain: UPF0213 protein spr1390 (99 aa).

Positions 3 to 78 (HKAYMYVLEC…KRKKRPQKEE (76 aa)) constitute a GIY-YIG domain.

The protein belongs to the UPF0213 family.

The chain is UPF0213 protein spr1390 from Streptococcus pneumoniae (strain ATCC BAA-255 / R6).